We begin with the raw amino-acid sequence, 483 residues long: MDDALAHLPRAFAGKTVLVLGDVMLDRFIYGAVDRISPEAPVPVIAVEKETAMLGGAGNVARNVAALGAKAVLIGLVGRDDAGAALRGMIDAEAGLEAELVVDPARRTTEKVRYISGSHQMLRVDREDRSPGDGAALLAAFETRLASADVVVLSDYAKGVLTPAVVRGAIDAAKAAGKPVIVDPKSRDFARYDGATLIKPNRKEAAEATGIVETSDAASEDAGAAILAMAPGLQAALITRGGAGMTLAVRNQPPIHLPATAIEVFDVSGAGDTVAATLALAVAAGASLAQAAQLANLAGGLVVAKLGTDVVTAAELTACASSAQGEPGEIKIADREQAQRIVEGWRARGLKVGFTNGCFDLLHPGHVSLLSQAKAACDRLIVGLNTDASVSKLKGPTRPVQKEQGRATVLASLSSVDLVVLFDEDTPLELIKAFRPDVLVKGADYTVETVVGSDVVLGYGGKVVLAELKQGQSTTNLIARMNS.

A ribokinase region spans residues 1 to 327 (MDDALAHLPR…ACASSAQGEP (327 aa)). 201–204 (NRKE) serves as a coordination point for ATP. Residue Asp-272 is part of the active site. Positions 354–483 (FTNGCFDLLH…TTNLIARMNS (130 aa)) are cytidylyltransferase.

It in the N-terminal section; belongs to the carbohydrate kinase PfkB family. The protein in the C-terminal section; belongs to the cytidylyltransferase family. As to quaternary structure, homodimer.

It catalyses the reaction D-glycero-beta-D-manno-heptose 7-phosphate + ATP = D-glycero-beta-D-manno-heptose 1,7-bisphosphate + ADP + H(+). The enzyme catalyses D-glycero-beta-D-manno-heptose 1-phosphate + ATP + H(+) = ADP-D-glycero-beta-D-manno-heptose + diphosphate. It participates in nucleotide-sugar biosynthesis; ADP-L-glycero-beta-D-manno-heptose biosynthesis; ADP-L-glycero-beta-D-manno-heptose from D-glycero-beta-D-manno-heptose 7-phosphate: step 1/4. The protein operates within nucleotide-sugar biosynthesis; ADP-L-glycero-beta-D-manno-heptose biosynthesis; ADP-L-glycero-beta-D-manno-heptose from D-glycero-beta-D-manno-heptose 7-phosphate: step 3/4. In terms of biological role, catalyzes the phosphorylation of D-glycero-D-manno-heptose 7-phosphate at the C-1 position to selectively form D-glycero-beta-D-manno-heptose-1,7-bisphosphate. Catalyzes the ADP transfer from ATP to D-glycero-beta-D-manno-heptose 1-phosphate, yielding ADP-D-glycero-beta-D-manno-heptose. The chain is Bifunctional protein HldE from Caulobacter vibrioides (strain ATCC 19089 / CIP 103742 / CB 15) (Caulobacter crescentus).